Reading from the N-terminus, the 488-residue chain is Glutamyl-tRNA(Gln) amidotransferase subunit A (488 aa).

Catalysis depends on charge relay system residues Lys-77 and Ser-152. Catalysis depends on Ser-176, which acts as the Acyl-ester intermediate.

This sequence belongs to the amidase family. GatA subfamily. In terms of assembly, heterotrimer of A, B and C subunits.

It catalyses the reaction L-glutamyl-tRNA(Gln) + L-glutamine + ATP + H2O = L-glutaminyl-tRNA(Gln) + L-glutamate + ADP + phosphate + H(+). In terms of biological role, allows the formation of correctly charged Gln-tRNA(Gln) through the transamidation of misacylated Glu-tRNA(Gln) in organisms which lack glutaminyl-tRNA synthetase. The reaction takes place in the presence of glutamine and ATP through an activated gamma-phospho-Glu-tRNA(Gln). This Streptococcus equi subsp. zooepidemicus (strain H70) protein is Glutamyl-tRNA(Gln) amidotransferase subunit A.